The following is a 179-amino-acid chain: ATP synthase subunit b (179 aa).

A helical membrane pass occupies residues 27-47; that stretch reads TAITFLVMLAVLAKFAWGPIV.

Belongs to the ATPase B chain family. F-type ATPases have 2 components, F(1) - the catalytic core - and F(0) - the membrane proton channel. F(1) has five subunits: alpha(3), beta(3), gamma(1), delta(1), epsilon(1). F(0) has three main subunits: a(1), b(2) and c(10-14). The alpha and beta chains form an alternating ring which encloses part of the gamma chain. F(1) is attached to F(0) by a central stalk formed by the gamma and epsilon chains, while a peripheral stalk is formed by the delta and b chains.

The protein resides in the cell inner membrane. Its function is as follows. F(1)F(0) ATP synthase produces ATP from ADP in the presence of a proton or sodium gradient. F-type ATPases consist of two structural domains, F(1) containing the extramembraneous catalytic core and F(0) containing the membrane proton channel, linked together by a central stalk and a peripheral stalk. During catalysis, ATP synthesis in the catalytic domain of F(1) is coupled via a rotary mechanism of the central stalk subunits to proton translocation. In terms of biological role, component of the F(0) channel, it forms part of the peripheral stalk, linking F(1) to F(0). This Anaeromyxobacter dehalogenans (strain 2CP-C) protein is ATP synthase subunit b.